A 319-amino-acid chain; its full sequence is Mitochondrial thiamine pyrophosphate carrier 1 (319 aa).

Solcar repeat units follow at residues 12–110 (GQRY…VTQS), 121–207 (PQPA…VRVP), and 214–309 (PFGS…VLKI). 6 consecutive transmembrane segments (helical) span residues 17-35 (VVAA…VAPL), 91-107 (LLYI…YRTV), 127-147 (FVSG…FDLL), 182-201 (GVSA…FATY), 221-237 (TAGV…VFPL), and 284-301 (GLTV…VTMW).

It belongs to the mitochondrial carrier (TC 2.A.29) family.

It is found in the mitochondrion inner membrane. Its function is as follows. Mitochondrial transporter that mediates uptake of thiamine pyrophosphate (ThPP) into mitochondria. The polypeptide is Mitochondrial thiamine pyrophosphate carrier 1 (TPC1) (Coccidioides immitis (strain RS) (Valley fever fungus)).